The primary structure comprises 264 residues: MSKITVSTLNKMKAEKNKITALTAYDASFAKLFHDNGVEVILVGDSLGMVLQGGDDTLGVTNQDIAYHTRCVRAGSRELFVIADMPFMTYSSPNDTCKNAAELMRAGANMVKLEGGEWLFESIEALTQQGIPVCGHLGLTPQSVHVFGGFKVQGRAEEQALKIIADAKALEAAGAQLLVLECIPSALAKRVTDALTIPTIGIGAGNTTDGQILVMHDLVGISAGFIPKFSKNFLLETGNMPEAVKKYCTDVKSGAFPSAEHEFK.

Mg(2+) is bound by residues aspartate 45 and aspartate 84. Residues 45 to 46, aspartate 84, and lysine 112 contribute to the 3-methyl-2-oxobutanoate site; that span reads DS. Residue glutamate 114 participates in Mg(2+) binding. Residue glutamate 181 is the Proton acceptor of the active site.

Belongs to the PanB family. Homodecamer; pentamer of dimers. The cofactor is Mg(2+).

It localises to the cytoplasm. The catalysed reaction is 3-methyl-2-oxobutanoate + (6R)-5,10-methylene-5,6,7,8-tetrahydrofolate + H2O = 2-dehydropantoate + (6S)-5,6,7,8-tetrahydrofolate. It functions in the pathway cofactor biosynthesis; (R)-pantothenate biosynthesis; (R)-pantoate from 3-methyl-2-oxobutanoate: step 1/2. Its function is as follows. Catalyzes the reversible reaction in which hydroxymethyl group from 5,10-methylenetetrahydrofolate is transferred onto alpha-ketoisovalerate to form ketopantoate. The polypeptide is 3-methyl-2-oxobutanoate hydroxymethyltransferase (Pseudoalteromonas translucida (strain TAC 125)).